The primary structure comprises 396 residues: Phospholipase A1-II 4 (396 aa).

S221 serves as the catalytic Acyl-ester intermediate. Catalysis depends on charge relay system residues S221, D282, and H319.

Belongs to the AB hydrolase superfamily. Lipase family.

It is found in the cytoplasm. Functionally, acylhydrolase that catalyzes the hydrolysis of phospholipids at the sn-1 position. In Oryza sativa subsp. japonica (Rice), this protein is Phospholipase A1-II 4.